We begin with the raw amino-acid sequence, 548 residues long: NAD(P)H-quinone oxidoreductase chain 4 (548 aa).

14 consecutive transmembrane segments (helical) span residues 17–37 (VPWL…IPFI), 48–68 (WYAL…YLTG), 103–123 (LILL…PVTF), 127–147 (LFFF…AVQD), 149–169 (LLFF…LAIW), 181–201 (FILY…AMGF), 222–242 (GFQL…LPIV), 256–276 (TAPV…YALL), 290–310 (FAPL…LTSF), 327–347 (MGFV…GAML), 348–368 (QMIS…ATYD), 389–409 (FALW…SGFV), 430–450 (VVIC…LLSM), and 477–497 (VYII…PRLM).

This sequence belongs to the complex I subunit 4 family.

It localises to the cellular thylakoid membrane. The catalysed reaction is a plastoquinone + NADH + (n+1) H(+)(in) = a plastoquinol + NAD(+) + n H(+)(out). It catalyses the reaction a plastoquinone + NADPH + (n+1) H(+)(in) = a plastoquinol + NADP(+) + n H(+)(out). In terms of biological role, NDH-1 shuttles electrons from NAD(P)H, via FMN and iron-sulfur (Fe-S) centers, to quinones in the respiratory chain. The immediate electron acceptor for the enzyme in this species is believed to be plastoquinone. Couples the redox reaction to proton translocation (for every two electrons transferred, four hydrogen ions are translocated across the cytoplasmic membrane), and thus conserves the redox energy in a proton gradient. This is NAD(P)H-quinone oxidoreductase chain 4 from Synechococcus sp. (strain CC9902).